The primary structure comprises 335 residues: BTB and MATH domain-containing protein 39 (335 aa).

Positions 14–141 constitute an MATH domain; sequence MKTLCFKIMN…NGVFTIEFDL (128 aa). Residues 161–226 enclose the BTB domain; that stretch reads ADGKLIVEDQ…LQLDEFKVNV (66 aa).

The protein is BTB and MATH domain-containing protein 39 of Caenorhabditis briggsae.